Here is a 160-residue protein sequence, read N- to C-terminus: Cytochrome b6-f complex subunit 4 (160 aa).

A run of 3 helical transmembrane segments spans residues 36–56, 95–115, and 131–151; these read LLYI…GLAV, LLGV…PFLE, and TVFL…TLPI.

Belongs to the cytochrome b family. PetD subfamily. As to quaternary structure, the 4 large subunits of the cytochrome b6-f complex are cytochrome b6, subunit IV (17 kDa polypeptide, petD), cytochrome f and the Rieske protein, while the 4 small subunits are petG, petL, petM and petN. The complex functions as a dimer.

It localises to the plastid. The protein resides in the chloroplast thylakoid membrane. Component of the cytochrome b6-f complex, which mediates electron transfer between photosystem II (PSII) and photosystem I (PSI), cyclic electron flow around PSI, and state transitions. The polypeptide is Cytochrome b6-f complex subunit 4 (Coffea arabica (Arabian coffee)).